Reading from the N-terminus, the 172-residue chain is NAD(P)H-quinone oxidoreductase subunit I, chloroplastic (172 aa).

2 consecutive 4Fe-4S ferredoxin-type domains span residues 55–84 and 95–124; these read GRIH…VDWK and LNYS…MTEE. Positions 64, 67, 70, 74, 104, 107, 110, and 114 each coordinate [4Fe-4S] cluster.

This sequence belongs to the complex I 23 kDa subunit family. In terms of assembly, NDH is composed of at least 16 different subunits, 5 of which are encoded in the nucleus. It depends on [4Fe-4S] cluster as a cofactor.

It localises to the plastid. It is found in the chloroplast thylakoid membrane. The catalysed reaction is a plastoquinone + NADH + (n+1) H(+)(in) = a plastoquinol + NAD(+) + n H(+)(out). It carries out the reaction a plastoquinone + NADPH + (n+1) H(+)(in) = a plastoquinol + NADP(+) + n H(+)(out). Its function is as follows. NDH shuttles electrons from NAD(P)H:plastoquinone, via FMN and iron-sulfur (Fe-S) centers, to quinones in the photosynthetic chain and possibly in a chloroplast respiratory chain. The immediate electron acceptor for the enzyme in this species is believed to be plastoquinone. Couples the redox reaction to proton translocation, and thus conserves the redox energy in a proton gradient. This is NAD(P)H-quinone oxidoreductase subunit I, chloroplastic from Arabidopsis thaliana (Mouse-ear cress).